Reading from the N-terminus, the 124-residue chain is Fluoride-specific ion channel FluC (124 aa).

Transmembrane regions (helical) follow at residues 5 to 25 (LLVS…AVWF), 32 to 52 (FAFG…ITLG), 61 to 81 (LLFV…SAEV), and 94 to 114 (LAVI…GILV). 2 residues coordinate Na(+): Gly-69 and Thr-72.

It belongs to the fluoride channel Fluc/FEX (TC 1.A.43) family.

Its subcellular location is the cell inner membrane. It catalyses the reaction fluoride(in) = fluoride(out). Its activity is regulated as follows. Na(+) is not transported, but it plays an essential structural role and its presence is essential for fluoride channel function. Fluoride-specific ion channel. Important for reducing fluoride concentration in the cell, thus reducing its toxicity. This Haemophilus ducreyi (strain 35000HP / ATCC 700724) protein is Fluoride-specific ion channel FluC.